A 263-amino-acid polypeptide reads, in one-letter code: HTH-type transcriptional repressor NanR (263 aa).

One can recognise an HTH gntR-type domain in the interval 30–98 (KKLSEMVEEE…NGERARVSRP (69 aa)). Positions 58–77 (ERELMAFFNVGRPSVREALA) form a DNA-binding region, H-T-H motif.

Belongs to the NanR family.

Functionally, transcriptional repressor that controls expression of the genes required for the catabolism of sialic acids. In Salmonella bongori (strain ATCC 43975 / DSM 13772 / NCTC 12419), this protein is HTH-type transcriptional repressor NanR.